A 598-amino-acid chain; its full sequence is Beta-fructofuranosidase, insoluble isoenzyme 2 (598 aa).

Positions Met-1–Ala-25 are cleaved as a signal peptide. Residue Asp-69 is part of the active site. Asn-164, Asn-189, and Asn-348 each carry an N-linked (GlcNAc...) asparagine glycan.

It belongs to the glycosyl hydrolase 32 family. As to expression, expressed in leaves and flowers. Weakly expressed in seeds. Expressed in growing roots, node and the rapidly elongating zone of the internode.

Its subcellular location is the secreted. The protein resides in the cell wall. It carries out the reaction Hydrolysis of terminal non-reducing beta-D-fructofuranoside residues in beta-D-fructofuranosides.. In terms of biological role, cell wall-associated invertase that cleaves sucrose into glucose and fructose and is required for assimilated carbon partitioning during early grain-filling. May be involved in sucrose unloaded in the ovular and stylar vascular tissues for the stimulation of starch synthesis in the developing endosperm during grain-filling. Sugar homeostasis mediated by CIN2/GIF1 plays an important role in constitutive and induced physical and chemical defense against pathogens. The sequence is that of Beta-fructofuranosidase, insoluble isoenzyme 2 (CIN2) from Oryza sativa subsp. japonica (Rice).